Reading from the N-terminus, the 378-residue chain is Chorismate synthase (378 aa).

R49 contributes to the NADP(+) binding site. Residues 126–128 (RAS), G287, 302–306 (KPTAT), and R328 each bind FMN.

Belongs to the chorismate synthase family. In terms of assembly, homotetramer. FMNH2 serves as cofactor.

It carries out the reaction 5-O-(1-carboxyvinyl)-3-phosphoshikimate = chorismate + phosphate. Its pathway is metabolic intermediate biosynthesis; chorismate biosynthesis; chorismate from D-erythrose 4-phosphate and phosphoenolpyruvate: step 7/7. Catalyzes the anti-1,4-elimination of the C-3 phosphate and the C-6 proR hydrogen from 5-enolpyruvylshikimate-3-phosphate (EPSP) to yield chorismate, which is the branch point compound that serves as the starting substrate for the three terminal pathways of aromatic amino acid biosynthesis. This reaction introduces a second double bond into the aromatic ring system. This Synechococcus sp. (strain JA-3-3Ab) (Cyanobacteria bacterium Yellowstone A-Prime) protein is Chorismate synthase.